Here is a 434-residue protein sequence, read N- to C-terminus: Glutamate-1-semialdehyde 2,1-aminomutase (434 aa).

Residue Lys267 is modified to N6-(pyridoxal phosphate)lysine.

This sequence belongs to the class-III pyridoxal-phosphate-dependent aminotransferase family. HemL subfamily. As to quaternary structure, homodimer. Pyridoxal 5'-phosphate serves as cofactor.

It is found in the cytoplasm. It carries out the reaction (S)-4-amino-5-oxopentanoate = 5-aminolevulinate. The protein operates within porphyrin-containing compound metabolism; protoporphyrin-IX biosynthesis; 5-aminolevulinate from L-glutamyl-tRNA(Glu): step 2/2. It functions in the pathway porphyrin-containing compound metabolism; chlorophyll biosynthesis. The chain is Glutamate-1-semialdehyde 2,1-aminomutase from Roseiflexus castenholzii (strain DSM 13941 / HLO8).